The primary structure comprises 498 residues: Early growth response protein 1 (498 aa).

Disordered stretches follow at residues asparagine 137 to isoleucine 203 and proline 287 to alanine 308. Positions serine 139–serine 163 are enriched in low complexity. The span at phenylalanine 179–serine 202 shows a compositional bias: polar residues. 3 consecutive C2H2-type zinc fingers follow at residues tyrosine 307–histidine 331, phenylalanine 337–histidine 359, and phenylalanine 365–histidine 387. Positions aspartate 378–valine 422 are disordered. The segment covering arginine 382–aspartate 392 has biased composition (basic residues). The segment covering alanine 398 to valine 422 has biased composition (low complexity).

Belongs to the EGR C2H2-type zinc-finger protein family.

The protein localises to the nucleus. The protein resides in the cytoplasm. Functionally, transcriptional regulator. Recognizes and binds to the DNA sequence 5'-GCG(T/G)GGGCG-3'(EGR-site) in the promoter region of target genes. Binds double-stranded target DNA, irrespective of the cytosine methylation status. Regulates the transcription of numerous target genes, and thereby plays an important role in regulating the response to growth factors, DNA damage, and ischemia. Plays a role in the regulation of cell survival, proliferation and cell death. Mediates responses to ischemia and hypoxia; regulates the expression of proteins that are involved in inflammatory processes. Plays a role in regulating the expression of circadian clock genes. The sequence is that of Early growth response protein 1 from Xenopus tropicalis (Western clawed frog).